We begin with the raw amino-acid sequence, 107 residues long: 2Fe-2S ferredoxin CtmE (107 aa).

Positions Val3–Glu106 constitute a 2Fe-2S ferredoxin-type domain. [2Fe-2S] cluster-binding residues include Cys41, Cys47, Cys50, and Cys87.

Belongs to the adrenodoxin/putidaredoxin family. It depends on [2Fe-2S] cluster as a cofactor.

Its pathway is terpene metabolism; monoterpene degradation. Functionally, involved in the degradation of the cyclic monoterpene limonene. Probably part of an electron transfer system involved in the oxidation of limonene to perillyl alcohol. In Castellaniella defragrans (strain DSM 12143 / CCUG 39792 / 65Phen) (Alcaligenes defragrans), this protein is 2Fe-2S ferredoxin CtmE.